The following is a 160-amino-acid chain: Cytochrome b6-f complex subunit 4 (160 aa).

Helical transmembrane passes span 36–56, 95–115, and 131–151; these read LLYV…ALAV, LLGV…PFIE, and TVFL…ALPL.

It belongs to the cytochrome b family. PetD subfamily. As to quaternary structure, the 4 large subunits of the cytochrome b6-f complex are cytochrome b6, subunit IV (17 kDa polypeptide, PetD), cytochrome f and the Rieske protein, while the 4 small subunits are PetG, PetL, PetM and PetN. The complex functions as a dimer.

The protein resides in the cellular thylakoid membrane. In terms of biological role, component of the cytochrome b6-f complex, which mediates electron transfer between photosystem II (PSII) and photosystem I (PSI), cyclic electron flow around PSI, and state transitions. This is Cytochrome b6-f complex subunit 4 from Nostoc punctiforme (strain ATCC 29133 / PCC 73102).